Consider the following 117-residue polypeptide: Pancreatic progenitor cell differentiation and proliferation factor A (117 aa).

The segment at 22-46 (GSTSSNSSCSSSEYTGEVIPHPPGL) is disordered. A compositionally biased stretch (low complexity) spans 23 to 33 (STSSNSSCSSS).

Belongs to the PPDPF family. In terms of tissue distribution, expressed exclusively in the exocrine cells during pancreas development.

Probable regulator of exocrine pancreas development. This is Pancreatic progenitor cell differentiation and proliferation factor A (ppdpfa) from Danio rerio (Zebrafish).